Here is a 203-residue protein sequence, read N- to C-terminus: Urease accessory protein UreG (203 aa).

14 to 21 (GPVGSGKT) serves as a coordination point for GTP.

The protein belongs to the SIMIBI class G3E GTPase family. UreG subfamily. In terms of assembly, homodimer. UreD, UreF and UreG form a complex that acts as a GTP-hydrolysis-dependent molecular chaperone, activating the urease apoprotein by helping to assemble the nickel containing metallocenter of UreC. The UreE protein probably delivers the nickel.

The protein localises to the cytoplasm. In terms of biological role, facilitates the functional incorporation of the urease nickel metallocenter. This process requires GTP hydrolysis, probably effectuated by UreG. This Rhizobium johnstonii (strain DSM 114642 / LMG 32736 / 3841) (Rhizobium leguminosarum bv. viciae) protein is Urease accessory protein UreG.